The sequence spans 147 residues: D-aminoacyl-tRNA deacylase (147 aa).

The short motif at 136-137 (GP) is the Gly-cisPro motif, important for rejection of L-amino acids element.

It belongs to the DTD family. Homodimer.

Its subcellular location is the cytoplasm. The catalysed reaction is glycyl-tRNA(Ala) + H2O = tRNA(Ala) + glycine + H(+). It carries out the reaction a D-aminoacyl-tRNA + H2O = a tRNA + a D-alpha-amino acid + H(+). An aminoacyl-tRNA editing enzyme that deacylates mischarged D-aminoacyl-tRNAs. Also deacylates mischarged glycyl-tRNA(Ala), protecting cells against glycine mischarging by AlaRS. Acts via tRNA-based rather than protein-based catalysis; rejects L-amino acids rather than detecting D-amino acids in the active site. By recycling D-aminoacyl-tRNA to D-amino acids and free tRNA molecules, this enzyme counteracts the toxicity associated with the formation of D-aminoacyl-tRNA entities in vivo and helps enforce protein L-homochirality. This is D-aminoacyl-tRNA deacylase from Streptococcus pyogenes serotype M6 (strain ATCC BAA-946 / MGAS10394).